Consider the following 455-residue polypeptide: Glycosyl hydrolase family 109 protein (455 aa).

Residues 1 to 33 (MAGIDRRGFLKASMASVAAAALAGCASQQGTSA) constitute a signal peptide (tat-type signal). NAD(+)-binding positions include 62–63 (ER), aspartate 84, glutamine 112, 133–136 (WALH), 153–154 (EV), and asparagine 182. Substrate is bound by residues tyrosine 211, arginine 230, 242 to 245 (YPTH), and tyrosine 324. Tyrosine 242 serves as a coordination point for NAD(+).

The protein belongs to the Gfo/Idh/MocA family. Glycosyl hydrolase 109 subfamily. NAD(+) serves as cofactor. In terms of processing, predicted to be exported by the Tat system. The position of the signal peptide cleavage has not been experimentally proven.

Functionally, glycosidase. This chain is Glycosyl hydrolase family 109 protein, found in Shewanella amazonensis (strain ATCC BAA-1098 / SB2B).